The following is a 178-amino-acid chain: Conodipine-P2 (178 aa).

Residues 1–24 (MKLLAPVLWAMAALGVTWLVAVDS) form the signal peptide. 4-hydroxyproline occurs at positions 38, 42, and 49. The active site involves His54. Residues 98-130 (KREVTSHRATSIAHSRLWKTALDQKSFLNRKAR) constitute a propeptide, interchain peptide. A Pyrrolidone carboxylic acid modification is found at Gln131. A 4-hydroxyproline modification is found at Pro137.

The protein belongs to the phospholipase A2 family. Group IX subfamily. As to quaternary structure, heterodimer of an alpha and a beta chain; probably disulfide-linked. The cofactor is Ca(2+). Expressed by the venom duct.

Its subcellular location is the secreted. It carries out the reaction a 1,2-diacyl-sn-glycero-3-phosphocholine + H2O = a 1-acyl-sn-glycero-3-phosphocholine + a fatty acid + H(+). Catalyzes the calcium-dependent hydrolysis of the 2-acyl groups in 3-sn-phosphoglycerides. This Conus purpurascens (Purple cone) protein is Conodipine-P2.